Here is a 305-residue protein sequence, read N- to C-terminus: MSSQTAPRRRVTIHELRRMKDAGEKIAVVTAYDATAARLADAAGVDVVLVGDSLGMVVQGHESTLPVTLEHMIYHSAAVRRGLARSSGRAHLVGDMPFGSYQASADEAVKSAMRLVAEGGVESVKLEGGAEFVEVIRRIARAGVPVMGHIGLTPQAVHRMGGYVVQGKDSEKAQQLLRDARALELAGCYAIVLECIPAELARIISSQLRIPTIGIGAGLHCDGQVLVLNDLLGMDDAFTPKFVKRFGEIGQAISTAVGAYVGEVKRRVFPDDAHSFHSSTVRLVPAAPVDEDDGEPSGGVMGAPV.

Mg(2+) is bound by residues Asp52 and Asp95. 3-methyl-2-oxobutanoate-binding positions include Asp52–Ser53, Asp95, and Lys125. A Mg(2+)-binding site is contributed by Glu127. Residue Glu194 is the Proton acceptor of the active site.

Belongs to the PanB family. In terms of assembly, homodecamer; pentamer of dimers. Mg(2+) serves as cofactor.

The protein resides in the cytoplasm. The catalysed reaction is 3-methyl-2-oxobutanoate + (6R)-5,10-methylene-5,6,7,8-tetrahydrofolate + H2O = 2-dehydropantoate + (6S)-5,6,7,8-tetrahydrofolate. It participates in cofactor biosynthesis; (R)-pantothenate biosynthesis; (R)-pantoate from 3-methyl-2-oxobutanoate: step 1/2. In terms of biological role, catalyzes the reversible reaction in which hydroxymethyl group from 5,10-methylenetetrahydrofolate is transferred onto alpha-ketoisovalerate to form ketopantoate. This chain is 3-methyl-2-oxobutanoate hydroxymethyltransferase, found in Anaeromyxobacter sp. (strain Fw109-5).